A 334-amino-acid polypeptide reads, in one-letter code: Ribosomal RNA small subunit methyltransferase H (334 aa).

Residues 34–36 (GGY), aspartate 52, alanine 87, aspartate 100, and glutamine 107 each bind S-adenosyl-L-methionine.

The protein belongs to the methyltransferase superfamily. RsmH family.

The protein localises to the cytoplasm. The enzyme catalyses cytidine(1402) in 16S rRNA + S-adenosyl-L-methionine = N(4)-methylcytidine(1402) in 16S rRNA + S-adenosyl-L-homocysteine + H(+). Functionally, specifically methylates the N4 position of cytidine in position 1402 (C1402) of 16S rRNA. This chain is Ribosomal RNA small subunit methyltransferase H, found in Maricaulis maris (strain MCS10) (Caulobacter maris).